We begin with the raw amino-acid sequence, 593 residues long: A-type ATP synthase subunit A (593 aa).

Position 236–243 (236–243 (GPFGSGKT)) interacts with ATP.

The protein belongs to the ATPase alpha/beta chains family. In terms of assembly, has multiple subunits with at least A(3), B(3), C, D, E, F, H, I and proteolipid K(x).

Its subcellular location is the cell membrane. It catalyses the reaction ATP + H2O + 4 H(+)(in) = ADP + phosphate + 5 H(+)(out). Functionally, component of the A-type ATP synthase that produces ATP from ADP in the presence of a proton gradient across the membrane. The A chain is the catalytic subunit. This Pyrobaculum arsenaticum (strain DSM 13514 / JCM 11321 / PZ6) protein is A-type ATP synthase subunit A.